The primary structure comprises 285 residues: Tetraspanin-3 (285 aa).

At 1-6 the chain is on the cytoplasmic side; it reads MRTSNH. Residues 7 to 27 form a helical membrane-spanning segment; sequence LIGLVNFLTFLLSIPILGGGI. Over 28–43 the chain is Extracellular; that stretch reads WLSSRANSTDCLRFLQ. The N-linked (GlcNAc...) asparagine glycan is linked to Asn34. A helical membrane pass occupies residues 44-64; it reads WPLIVIGISIMVVSLAGFAGA. Residues 65-71 are Cytoplasmic-facing; the sequence is CYRNKFL. Residues 72–92 form a helical membrane-spanning segment; that stretch reads MWLYLVVMLLIIAALIGFIIF. Topologically, residues 93 to 235 are extracellular; sequence AYAVTDKGSG…LGSLKKSWRK (143 aa). A glycan (N-linked (GlcNAc...) asparagine) is linked at Asn187. The chain crosses the membrane as a helical span at residues 236–256; sequence VSVINIVVLIILVIFYVIAYA. Topologically, residues 257-285 are cytoplasmic; that stretch reads AYRNVKRIDNDEPAGEARMTKSHPSHFHL.

The protein belongs to the tetraspanin (TM4SF) family.

The protein localises to the cell membrane. In terms of biological role, may be involved in the regulation of cell differentiation. This chain is Tetraspanin-3 (TET3), found in Arabidopsis thaliana (Mouse-ear cress).